A 424-amino-acid polypeptide reads, in one-letter code: Otefin (424 aa).

The region spanning 1–30 (MADVDDFDSLSNAELRAKMLAQGLPNIPVT) is the LEM domain. A required for binding to Med and germline stem cell maintenance region spans residues 1-50 (MADVDDFDSLSNAELRAKMLAQGLPNIPVTDSSRKVLVKRLRASIGGQAS). Positions 42–186 (RASIGGQASP…SSKRADREEN (145 aa)) are disordered. Phosphoserine is present on residues Ser-44, Ser-50, and Ser-54. Thr-63 bears the Phosphothreonine mark. Low complexity predominate over residues 65–80 (APAPGAPSAPAAASTP). A Nuclear localization signal motif is present at residues 92–99 (ATKARRTI). The segment covering 103 to 133 (EAKEPVRRLPEEAIRRRPDEADRLRSEEPVA) has biased composition (basic and acidic residues). Ser-152 bears the Phosphoserine mark. Over residues 157–170 (SERKVVEPLRKPET) the composition is skewed to basic and acidic residues. Phosphoserine occurs at positions 192 and 198. The tract at residues 259-278 (PSVPSARAQTTSSTRSYDYA) is disordered. A compositionally biased stretch (low complexity) spans 262–274 (PSARAQTTSSTRS). The required for binding to Med stretch occupies residues 271–400 (STRSYDYASN…NRWLNSLEQK (130 aa)). A Phosphoserine modification is found at Ser-321. At Thr-324 the chain carries Phosphothreonine. At Ser-326 the chain carries Phosphoserine. Thr-358 carries the phosphothreonine modification. 2 positions are modified to phosphoserine: Ser-378 and Ser-385. The tract at residues 400-424 (KYHIKSKLFIVLLVLLLIGVYYIFY) is essential for nuclear membrane localization and germline stem cell maintenance. Positions 406-424 (KLFIVLLVLLLIGVYYIFY) are essential for nuclear membrane localization.

In terms of assembly, interacts with Med. Interacts with Lam. Interacts with aurA, alphaTub84B, gammaTub23C and gammaTub37C. Interacts with Nemp. Phosphorylation at Thr-63 by aurA may be required for exit from mitosis. May be phosphorylated by Cdk1 and Pka-C1. Expressed in all cell types of the germarium and testis. Expressed in nurse cells, follicle cells and oocytes.

The protein resides in the nucleus inner membrane. It is found in the nucleus. It localises to the nucleoplasm. The protein localises to the cytoplasm. Its subcellular location is the chromosome. The protein resides in the cytoskeleton. It is found in the spindle pole. It localises to the microtubule organizing center. The protein localises to the centrosome. Inner nuclear membrane protein. Involved in the attachment of membrane vesicles to chromatin during nuclear assembly, and is probably required for centrosome maturation and cell cycle progression during mitosis. Essential for differentiation of certain tissues and the maintenance of progenitor cell populations. Required for the differentiation and maintenance of male and female germline stem cells (GSCs), as well as the maintenance of somatic cells in the GSC niche. This role is likely to be independent of the BMP (Dpp) pathway that negatively regulates bam transcription during GSC differentiation. During development, plays essential and redundant functions with the other LEM domain proteins; bocks and MAN1. Also has a redundant but important role with bocks during larval development. This chain is Otefin, found in Drosophila melanogaster (Fruit fly).